The primary structure comprises 308 residues: ADP-L-glycero-D-manno-heptose-6-epimerase (308 aa).

NADP(+) contacts are provided by residues 10 to 11 (FI), 31 to 32 (DN), Lys-38, Lys-53, 75 to 79 (EGACS), and Asn-92. Catalysis depends on Tyr-139, which acts as the Proton acceptor. Residue Lys-143 coordinates NADP(+). Asn-168 lines the substrate pocket. Val-169 and Lys-177 together coordinate NADP(+). The active-site Proton acceptor is the Lys-177. Residues Ser-179, His-186, 200–203 (FAGS), Arg-208, and Tyr-271 each bind substrate.

The protein belongs to the NAD(P)-dependent epimerase/dehydratase family. HldD subfamily. Homopentamer. Requires NADP(+) as cofactor.

It carries out the reaction ADP-D-glycero-beta-D-manno-heptose = ADP-L-glycero-beta-D-manno-heptose. It functions in the pathway nucleotide-sugar biosynthesis; ADP-L-glycero-beta-D-manno-heptose biosynthesis; ADP-L-glycero-beta-D-manno-heptose from D-glycero-beta-D-manno-heptose 7-phosphate: step 4/4. Catalyzes the interconversion between ADP-D-glycero-beta-D-manno-heptose and ADP-L-glycero-beta-D-manno-heptose via an epimerization at carbon 6 of the heptose. This Actinobacillus succinogenes (strain ATCC 55618 / DSM 22257 / CCUG 43843 / 130Z) protein is ADP-L-glycero-D-manno-heptose-6-epimerase.